The chain runs to 333 residues: Low specificity L-threonine aldolase (333 aa).

Lysine 197 bears the N6-(pyridoxal phosphate)lysine mark.

Belongs to the threonine aldolase family. In terms of assembly, homotetramer. It depends on pyridoxal 5'-phosphate as a cofactor.

It catalyses the reaction L-threonine = acetaldehyde + glycine. The catalysed reaction is L-allo-threonine = acetaldehyde + glycine. Functionally, catalyzes the cleavage of L-allo-threonine and L-threonine to glycine and acetaldehyde. L-threo-phenylserine and L-erythro-phenylserine are also good substrates. This chain is Low specificity L-threonine aldolase (ltaE), found in Escherichia coli (strain K12).